A 403-amino-acid polypeptide reads, in one-letter code: MAAFLKMSVSVNFFRPFTRFLVPFTLHRKRNNLTILQRYMSSKIPAVTYPKNESTPPSEELELDKWKTTMKSSVQEECVSTISSSKDEDPLAATREFIEMWRLLGREVPEHITEEELKTLMECVSNTAKKKYLKYLYTKEKVKKARQIKKEMKAAAREEAKNIKLLETTEEDKQKNFLFLRLWDRNMDIAMGWKGAQAMQFGQPLVFDMAYENYMKRKELQNTVSQLLESEGWNRRNVDPFHIYFCNLKIDGALHRELVKRYQEKWDKLLLTSTEKSHVDLFPKDSIIYLTADSPNVMTTFRHDKVYVIGSFVDKSMQPGTSLAKAKRLNLATECLPLDKYLQWEIGNKNLTLDQMIRILLCLKNNGNWQEALQFVPKRKHTGFLEISQHSQEFINRLKKAKT.

A mitochondrion-targeting transit peptide spans 1-39 (MAAFLKMSVSVNFFRPFTRFLVPFTLHRKRNNLTILQRY). Phosphoserine is present on serine 84. A coiled-coil region spans residues 138-169 (TKEKVKKARQIKKEMKAAAREEAKNIKLLETT). Positions 191-383 (MGWKGAQAMQ…QFVPKRKHTG (193 aa)) constitute an SAM-dependent MTase TRM10-type domain.

Belongs to the class IV-like SAM-binding methyltransferase superfamily. TRM10 family. Component of mitochondrial ribonuclease P, a complex composed of TRMT10C/MRPP1, HSD17B10/MRPP2 and PRORP/MRPP3. Interacts with HSD17B10/MRPP2; forming the MRPP1-MRPP2 subcomplex of the mitochondrial ribonuclease P complex. Interacts with GRSF1.

The protein localises to the mitochondrion matrix. Its subcellular location is the mitochondrion nucleoid. The enzyme catalyses adenosine(9) in tRNA + S-adenosyl-L-methionine = N(1)-methyladenosine(9) in tRNA + S-adenosyl-L-homocysteine + H(+). It carries out the reaction guanosine(9) in tRNA + S-adenosyl-L-methionine = N(1)-methylguanosine(9) in tRNA + S-adenosyl-L-homocysteine + H(+). It catalyses the reaction an adenosine in mRNA + S-adenosyl-L-methionine = an N(1)-methyladenosine in mRNA + S-adenosyl-L-homocysteine + H(+). Functionally, mitochondrial tRNA N(1)-methyltransferase involved in mitochondrial tRNA maturation. Component of mitochondrial ribonuclease P, a complex composed of TRMT10C/MRPP1, HSD17B10/MRPP2 and PRORP/MRPP3, which cleaves tRNA molecules in their 5'-ends. Together with HSD17B10/MRPP2, forms a subcomplex of the mitochondrial ribonuclease P, named MRPP1-MRPP2 subcomplex, which displays functions that are independent of the ribonuclease P activity. The MRPP1-MRPP2 subcomplex catalyzes the formation of N(1)-methylguanine and N(1)-methyladenine at position 9 (m1G9 and m1A9, respectively) in tRNAs; TRMT10C/MRPP1 acting as the catalytic N(1)-methyltransferase subunit. The MRPP1-MRPP2 subcomplex also acts as a tRNA maturation platform: following 5'-end cleavage by the mitochondrial ribonuclease P complex, the MRPP1-MRPP2 subcomplex enhances the efficiency of 3'-processing catalyzed by ELAC2, retains the tRNA product after ELAC2 processing and presents the nascent tRNA to the mitochondrial CCA tRNA nucleotidyltransferase TRNT1 enzyme. In addition to tRNA N(1)-methyltransferase activity, TRMT10C/MRPP1 also acts as a mRNA N(1)-methyltransferase by mediating methylation of adenosine residues at the N(1) position of MT-ND5 mRNA. Associates with mitochondrial DNA complexes at the nucleoids to initiate RNA processing and ribosome assembly. This is tRNA methyltransferase 10 homolog C from Homo sapiens (Human).